The chain runs to 148 residues: uncharacterized protein (148 aa).

Residues 37–94 are compositionally biased toward low complexity; the sequence is NNNNYNNNNKNNNNNNNNNNNNNNNNNNNNNNNYINSCNSNNNNNNNNNNTKNNNINS. A disordered region spans residues 37–99; it reads NNNNYNNNNK…NNINSRTDKN (63 aa).

This is an uncharacterized protein from Dictyostelium discoideum (Social amoeba).